The sequence spans 643 residues: Rhophilin-1 (643 aa).

Residues 1 to 43 form a disordered region; sequence MILEERPDGQGTGEESSRPQDDGSIRKGYGSFVQNQPGQLQSH. Positions 15–25 are enriched in basic and acidic residues; sequence ESSRPQDDGSI. Positions 30–104 constitute an REM-1 domain; the sequence is GSFVQNQPGQ…LAELSTSVDV (75 aa). Ser31 is modified (phosphoserine). The span at 32–42 shows a compositional bias: polar residues; it reads FVQNQPGQLQS. The BRO1 domain maps to 115–462; it reads PMIPLGLKET…LAKYSQLERE (348 aa). In terms of domain architecture, PDZ spans 500–577; that stretch reads PVHMTRGEGS…EGVSLQVVSL (78 aa).

The protein belongs to the RHPN family. In terms of assembly, binds specifically to GTP-Rho. Interacts with ROPN1. Highly expressed in testis.

Has no enzymatic activity. May serve as a target for Rho, and interact with some cytoskeletal component upon Rho binding or relay a Rho signal to other molecules. This Mus musculus (Mouse) protein is Rhophilin-1 (Rhpn1).